Reading from the N-terminus, the 251-residue chain is Probable aquaporin TIP4-1 (251 aa).

The next 2 helical transmembrane spans lie at 26 to 46 (LVLT…AGVP) and 57 to 77 (ALAG…TAGF). An NPA 1 motif is present at residues 85-87 (NPA). Helical transmembrane passes span 104 to 124 (ALYV…LRYL), 144 to 164 (GLVM…ATIL), and 170 to 190 (VPGF…IAGG). The short motif at 198–200 (NPA) is the NPA 2 element. The chain crosses the membrane as a helical span at residues 219-239 (WLGPLIGGPLAGLVYESLFLV).

The protein belongs to the MIP/aquaporin (TC 1.A.8) family. TIP (TC 1.A.8.10) subfamily. In terms of tissue distribution, expressed in roots, leaves and anthers.

The protein localises to the vacuole membrane. Aquaporins facilitate the transport of water and small neutral solutes across cell membranes. May be involved in transport from the vacuolar compartment to the cytoplasm. This Oryza sativa subsp. japonica (Rice) protein is Probable aquaporin TIP4-1 (TIP4-1).